A 68-amino-acid polypeptide reads, in one-letter code: Conotoxin Cal12.1p1 (68 aa).

A propeptide spanning residues 1 to 23 (DLITNSYTRGKPRHVTSWRNLRT) is cleaved from the precursor.

Contains 4 disulfide bonds. In terms of tissue distribution, expressed by the venom duct.

It localises to the secreted. The protein is Conotoxin Cal12.1p1 of Californiconus californicus (California cone).